The primary structure comprises 296 residues: Ribosomal RNA small subunit methyltransferase H (296 aa).

Residues 41–43 (GGY), Asp-59, Phe-86, Asp-104, and Gln-111 each bind S-adenosyl-L-methionine.

The protein belongs to the methyltransferase superfamily. RsmH family.

The protein resides in the cytoplasm. It catalyses the reaction cytidine(1402) in 16S rRNA + S-adenosyl-L-methionine = N(4)-methylcytidine(1402) in 16S rRNA + S-adenosyl-L-homocysteine + H(+). Functionally, specifically methylates the N4 position of cytidine in position 1402 (C1402) of 16S rRNA. In Neorickettsia sennetsu (strain ATCC VR-367 / Miyayama) (Ehrlichia sennetsu), this protein is Ribosomal RNA small subunit methyltransferase H.